We begin with the raw amino-acid sequence, 241 residues long: Uridylate kinase (241 aa).

15–18 is an ATP binding site; it reads KLSG. The involved in allosteric activation by GTP stretch occupies residues 23–28; sequence GTEGFG. UMP is bound at residue Gly-57. ATP is bound by residues Gly-58 and Arg-62. UMP is bound by residues Asp-77 and 138–145; that span reads TGNPFFTT. The ATP site is built by Thr-165, Phe-171, and Asp-174.

Belongs to the UMP kinase family. In terms of assembly, homohexamer.

The protein resides in the cytoplasm. The catalysed reaction is UMP + ATP = UDP + ADP. It participates in pyrimidine metabolism; CTP biosynthesis via de novo pathway; UDP from UMP (UMPK route): step 1/1. With respect to regulation, allosterically activated by GTP. Inhibited by UTP. Functionally, catalyzes the reversible phosphorylation of UMP to UDP. The protein is Uridylate kinase of Salmonella choleraesuis (strain SC-B67).